We begin with the raw amino-acid sequence, 754 residues long: Phosphoribosylformylglycinamidine synthase subunit PurL (754 aa).

H54 is an active-site residue. Residues Y57 and K101 each contribute to the ATP site. Residue E103 participates in Mg(2+) binding. Residues 104–107 (SHNH) and R126 contribute to the substrate site. H105 functions as the Proton acceptor in the catalytic mechanism. D127 is a binding site for Mg(2+). Q252 contacts substrate. Position 280 (D280) interacts with Mg(2+). Residue 324–326 (ESQ) coordinates substrate. The tract at residues 386-412 (PVYQRPVSRPESQEALNADSSKGLPRP) is disordered. Residues N512 and G549 each contribute to the ATP site. Residue N550 participates in Mg(2+) binding. Position 552 (S552) interacts with substrate.

Belongs to the FGAMS family. In terms of assembly, monomer. Part of the FGAM synthase complex composed of 1 PurL, 1 PurQ and 2 PurS subunits.

The protein resides in the cytoplasm. It carries out the reaction N(2)-formyl-N(1)-(5-phospho-beta-D-ribosyl)glycinamide + L-glutamine + ATP + H2O = 2-formamido-N(1)-(5-O-phospho-beta-D-ribosyl)acetamidine + L-glutamate + ADP + phosphate + H(+). The protein operates within purine metabolism; IMP biosynthesis via de novo pathway; 5-amino-1-(5-phospho-D-ribosyl)imidazole from N(2)-formyl-N(1)-(5-phospho-D-ribosyl)glycinamide: step 1/2. Its function is as follows. Part of the phosphoribosylformylglycinamidine synthase complex involved in the purines biosynthetic pathway. Catalyzes the ATP-dependent conversion of formylglycinamide ribonucleotide (FGAR) and glutamine to yield formylglycinamidine ribonucleotide (FGAM) and glutamate. The FGAM synthase complex is composed of three subunits. PurQ produces an ammonia molecule by converting glutamine to glutamate. PurL transfers the ammonia molecule to FGAR to form FGAM in an ATP-dependent manner. PurS interacts with PurQ and PurL and is thought to assist in the transfer of the ammonia molecule from PurQ to PurL. In Mycobacterium leprae (strain Br4923), this protein is Phosphoribosylformylglycinamidine synthase subunit PurL.